The chain runs to 427 residues: UPF0229 protein YeaH (427 aa).

A compositionally biased stretch (basic and acidic residues) spans asparagine 79 to arginine 90. The tract at residues asparagine 79 to glutamate 110 is disordered. Residues glutamine 92–glutamine 102 are compositionally biased toward gly residues.

This sequence belongs to the UPF0229 family.

The sequence is that of UPF0229 protein YeaH from Escherichia coli (strain K12 / MC4100 / BW2952).